The primary structure comprises 395 residues: 1-deoxy-D-xylulose 5-phosphate reductoisomerase (395 aa).

7 residues coordinate NADPH: threonine 15, glycine 16, serine 17, isoleucine 18, glycine 41, asparagine 43, and asparagine 126. A 1-deoxy-D-xylulose 5-phosphate-binding site is contributed by lysine 127. Glutamate 128 is an NADPH binding site. Residue aspartate 152 coordinates Mn(2+). 1-deoxy-D-xylulose 5-phosphate-binding residues include serine 153, glutamate 154, serine 178, and histidine 201. Glutamate 154 is a binding site for Mn(2+). Residue glycine 207 participates in NADPH binding. 1-deoxy-D-xylulose 5-phosphate-binding residues include serine 214, asparagine 219, lysine 220, and glutamate 223. Position 223 (glutamate 223) interacts with Mn(2+).

The protein belongs to the DXR family. The cofactor is Mg(2+). Requires Mn(2+) as cofactor.

It catalyses the reaction 2-C-methyl-D-erythritol 4-phosphate + NADP(+) = 1-deoxy-D-xylulose 5-phosphate + NADPH + H(+). Its pathway is isoprenoid biosynthesis; isopentenyl diphosphate biosynthesis via DXP pathway; isopentenyl diphosphate from 1-deoxy-D-xylulose 5-phosphate: step 1/6. In terms of biological role, catalyzes the NADPH-dependent rearrangement and reduction of 1-deoxy-D-xylulose-5-phosphate (DXP) to 2-C-methyl-D-erythritol 4-phosphate (MEP). The protein is 1-deoxy-D-xylulose 5-phosphate reductoisomerase of Ruegeria sp. (strain TM1040) (Silicibacter sp.).